Here is a 362-residue protein sequence, read N- to C-terminus: Photosystem II protein D1 3 (362 aa).

Transmembrane regions (helical) follow at residues 29-46, 118-133, and 142-156; these read YVGW…SATI, HFLI…EWEL, and WICI…AATA. Chlorophyll a is bound at residue histidine 118. Tyrosine 126 lines the pheophytin a pocket. Aspartate 170 and glutamate 189 together coordinate [CaMn4O5] cluster. The chain crosses the membrane as a helical span at residues 197-218; that stretch reads FHMLGVAGVFGGALISAMHGSL. Residue histidine 198 coordinates chlorophyll a. A quinone-binding positions include histidine 215 and 264–265; that span reads AF. Fe cation is bound at residue histidine 215. Histidine 274 contributes to the Fe cation binding site. A helical transmembrane segment spans residues 276 to 290; that stretch reads IMAAFPVIGIWFTSL. Histidine 334, glutamate 335, aspartate 344, and alanine 346 together coordinate [CaMn4O5] cluster. Residues 347–362 constitute a propeptide that is removed on maturation; that stretch reads GTESAPVAVSTAKVGG.

It belongs to the reaction center PufL/M/PsbA/D family. As to quaternary structure, PSII is composed of 1 copy each of membrane proteins PsbA, PsbB, PsbC, PsbD, PsbE, PsbF, PsbH, PsbI, PsbJ, PsbK, PsbL, PsbM, PsbT, PsbX, Psb30/Ycf12, peripheral proteins PsbO, CyanoQ (PsbQ), PsbU, PsbV and a large number of cofactors. It forms dimeric complexes. The D1/D2 heterodimer binds P680, chlorophylls that are the primary electron donor of PSII, and subsequent electron acceptors. It shares a non-heme iron and each subunit binds pheophytin, quinone, additional chlorophylls, carotenoids and lipids. D1 provides most of the ligands for the Mn4-Ca-O5 cluster of the oxygen-evolving complex (OEC). There is also a Cl(-1) ion associated with D1 and D2, which is required for oxygen evolution. The PSII complex binds additional chlorophylls, carotenoids and specific lipids. serves as cofactor. Post-translationally, tyr-161 forms a radical intermediate that is referred to as redox-active TyrZ, YZ or Y-Z. C-terminally processed by CtpA; processing is essential to allow assembly of the oxygen-evolving complex and thus photosynthetic growth.

It localises to the cell inner membrane. The enzyme catalyses 2 a plastoquinone + 4 hnu + 2 H2O = 2 a plastoquinol + O2. In terms of biological role, photosystem II (PSII) is a light-driven water:plastoquinone oxidoreductase that uses light energy to abstract electrons from H(2)O, generating O(2) and a proton gradient subsequently used for ATP formation. It consists of a core antenna complex that captures photons, and an electron transfer chain that converts photonic excitation into a charge separation. The D1/D2 (PsbA/PsbD) reaction center heterodimer binds P680, the primary electron donor of PSII as well as several subsequent electron acceptors. The protein is Photosystem II protein D1 3 of Gloeobacter violaceus (strain ATCC 29082 / PCC 7421).